The sequence spans 937 residues: Coiled-coil domain-containing protein 39 (937 aa).

Coiled-coil stretches lie at residues 16–137, 165–339, 365–615, and 664–816; these read AIPV…CQMN, QQDD…KKDI, EKTL…SQIR, and VIKA…LKQT. Residues 866 to 937 are disordered; it reads LPTARGPSSR…NIPKEKKLSK (72 aa). Residues 873–887 show a composition bias toward low complexity; sequence SSRSSSQSSSLSSFR. 2 positions are modified to phosphoserine: serine 888 and serine 896. Positions 915 to 928 are enriched in low complexity; it reads NDSSRSASSGSNSN.

This sequence belongs to the CCDC39 family. Strongly expressed in tissues rich in ciliated cells. Expressed in olfactory and vomeronasal sensory neurons and the respiratory epithelium. Expressed in node cells carrying motile cilia, in upper and lower airways, and in ependymal and choroid plexus cells.

It is found in the cytoplasm. It localises to the cytoskeleton. The protein resides in the cilium axoneme. Required for assembly of dynein regulatory complex (DRC) and inner dynein arm (IDA) complexes, which are responsible for ciliary beat regulation, thereby playing a central role in motility in cilia and flagella. Probably acts together with CCDC40 to form a molecular ruler that determines the 96 nanometer (nm) repeat length and arrangements of components in cilia and flagella. Not required for outer dynein arm complexes assembly. The sequence is that of Coiled-coil domain-containing protein 39 from Mus musculus (Mouse).